A 225-amino-acid polypeptide reads, in one-letter code: Histone H1.5 (225 aa).

The disordered stretch occupies residues 1–23 (MSDVAVAETPAVKTPTKASKATK). Serine 2 carries the N-acetylserine modification. Over residues 9–19 (TPAVKTPTKAS) the composition is skewed to low complexity. An H15 domain is found at 37–113 (AHPPFINMIT…GANGRFRLAV (77 aa)). Over residues 145 to 156 (KKTVAKKTGDKV) the composition is skewed to basic and acidic residues. The segment at 145-225 (KKTVAKKTGD…RKAVGTAPKA (81 aa)) is disordered. The segment covering 157–175 (KKVKSPKRIAKPAVKKVTK) has biased composition (basic residues). Residues 176 to 208 (KAAAPTKSAANETAPKKAAATEAAPKKAAVTKA) are compositionally biased toward low complexity.

Belongs to the histone H1/H5 family.

The protein localises to the nucleus. It is found in the chromosome. Functionally, histones H1 are necessary for the condensation of nucleosome chains into higher-order structures. The polypeptide is Histone H1.5 (hil-5) (Caenorhabditis elegans).